A 178-amino-acid polypeptide reads, in one-letter code: MKLLAPVLWAMAALGVTWLVAVDSKESCTKHSNGCSTPLRLPCQEYFRPACDIHDNCYHCGTIFGISRKECDDAFLKDMNTLCKKLGSNSATCPARGKREVTSHRATSIAHSRLWKTALDQKSFLNRKARQVFFLLPTTCQGWAKNYHLAVKLAGANSYSVTTDLETCQGLEHCLPNH.

The N-terminal stretch at 1-24 is a signal peptide; that stretch reads MKLLAPVLWAMAALGVTWLVAVDS. Residues proline 38, proline 42, and proline 49 each carry the 4-hydroxyproline modification. Histidine 54 is an active-site residue. The propeptide at 98-130 is interchain peptide; that stretch reads KREVTSHRATSIAHSRLWKTALDQKSFLNRKAR. Glutamine 131 carries the post-translational modification Pyrrolidone carboxylic acid. Residue proline 137 is modified to 4-hydroxyproline.

It belongs to the phospholipase A2 family. Group IX subfamily. In terms of assembly, heterodimer of an alpha and a beta chain; probably disulfide-linked. Ca(2+) serves as cofactor. Expressed by the venom duct.

The protein localises to the secreted. The catalysed reaction is a 1,2-diacyl-sn-glycero-3-phosphocholine + H2O = a 1-acyl-sn-glycero-3-phosphocholine + a fatty acid + H(+). Its function is as follows. Catalyzes the calcium-dependent hydrolysis of the 2-acyl groups in 3-sn-phosphoglycerides. This Conus purpurascens (Purple cone) protein is Conodipine-P2.